We begin with the raw amino-acid sequence, 375 residues long: MSAPVGIPSLLLALCALLCVLNAVRSAYCPDPYKRYSDQHSYCVGVCCSCAKYRRGVSPWLKKELVRLHNNLRSKVAGGKSHSVDHLPRATNMLEMVWDDELAEVAQRWSDKCERKSDCEDCRRVGRFGVGQIIFEFDGKMDGKDMENEFFSRFMALQSFRKEQVARFTAGTNPKTAQILWAKTWRIGCGFLDFNYPGNGRRYTQIVCNYGPKGNEEGEEVYKAGSVCSSCPANTCCGDACKKHNLKANYHGLCKVIDENLPPEGNVPHKKTGNEVFYCGFNDESDCRHTVEGVDRWIRNVTTGGTWLNTYLGNYGHTVIEVRSAHHLQVRQAMPGHQDPQWTHGGRTTLSVPAVRGFGGGRQILNLTHLPPCRR.

The N-terminal stretch at 1–26 (MSAPVGIPSLLLALCALLCVLNAVRS) is a signal peptide. One can recognise an SCP domain in the interval 66–210 (VRLHNNLRSK…RRYTQIVCNY (145 aa)). Asparagine 300 and asparagine 366 each carry an N-linked (GlcNAc...) asparagine glycan.

It belongs to the CRISP family. Venom allergen 5-like subfamily. Post-translationally, contains 9 disulfide bonds. Expressed by the venom gland.

The protein resides in the secreted. The sequence is that of Venom allergen 5 from Lycosa singoriensis (Wolf spider).